Consider the following 354-residue polypeptide: Nicotinate-nucleotide--dimethylbenzimidazole phosphoribosyltransferase (354 aa).

The active-site Proton acceptor is the glutamate 317.

It belongs to the CobT family. Homodimer.

It catalyses the reaction 5,6-dimethylbenzimidazole + nicotinate beta-D-ribonucleotide = alpha-ribazole 5'-phosphate + nicotinate + H(+). It functions in the pathway nucleoside biosynthesis; alpha-ribazole biosynthesis; alpha-ribazole from 5,6-dimethylbenzimidazole: step 1/2. In terms of biological role, catalyzes the synthesis of alpha-ribazole-5'-phosphate from nicotinate mononucleotide (NAMN) and 5,6-dimethylbenzimidazole (DMB). The chain is Nicotinate-nucleotide--dimethylbenzimidazole phosphoribosyltransferase from Salmonella arizonae (strain ATCC BAA-731 / CDC346-86 / RSK2980).